Reading from the N-terminus, the 539-residue chain is Transcription factor prr1 (539 aa).

The DNA-binding element occupies 7–111 (SSDFVRKLFN…LLDNIKRKAP (105 aa)). T221 is subject to Phosphothreonine. S223 bears the Phosphoserine mark. A compositionally biased stretch (polar residues) spans 251–263 (GTAQPSLYNTPSS). The tract at residues 251 to 281 (GTAQPSLYNTPSSDYELANQEKPADSMASAA) is disordered. The Response regulatory domain maps to 369–483 (RILLVEDDEL…TLLQLLKKQL (115 aa)). D418 bears the 4-aspartylphosphate mark.

In the N-terminal section; belongs to the HSF family.

It localises to the nucleus. Its function is as follows. Involved in oxidative stress. Transcription factor that acts upon trr1 and ctt1. The protein is Transcription factor prr1 (prr1) of Schizosaccharomyces pombe (strain 972 / ATCC 24843) (Fission yeast).